A 532-amino-acid polypeptide reads, in one-letter code: Probable cyclic di-GMP phosphodiesterase PdeD (532 aa).

2 helical membrane passes run 16–36 (MIVCTICALVTLASTLSVRFI) and 245–265 (LPLAVLLSLLVGYIAWLATAY). The EAL domain occupies 266–515 (RMSFSREINL…DFPKWLAGSQ (250 aa)).

Its subcellular location is the cell membrane. It catalyses the reaction 3',3'-c-di-GMP + H2O = 5'-phosphoguanylyl(3'-&gt;5')guanosine + H(+). In terms of biological role, phosphodiesterase (PDE) that catalyzes the hydrolysis of cyclic-di-GMP (c-di-GMP) to 5'-pGpG. May serve as a negative regulator of cellulose synthesis (as has been suggested for S.typhimurium); overexpression inhibits cell aggregation in strains able to produce adhesive curli fimbriae. Cyclic-di-GMP is a second messenger which controls cell surface-associated traits in bacteria. The protein is Probable cyclic di-GMP phosphodiesterase PdeD of Escherichia coli (strain K12).